Reading from the N-terminus, the 323-residue chain is MTKSAKIGVLLANLGTPDSPTPKSISRYLWQFLTDPRVVDLPRCKWYPLLKAIILPLRSKRIAKNYQAIWTEQGSPLLAISRQQKDALQAYLDTQNINAQVEIAMTYGNPSIQSAVKNLLKNQVERIIVLPLYPQYSSSTTGAVFDAFANALKEERGLVPFDFIHSYHIDENYINALANSIKVRLKSDEFLLFSYHGIPLRYEKMGDYYREHCKQTTIAVVNKLGLTENQWGMTFQSRFGREEWLQPYTDKFLESAATQNIQKIAVICPGFSVDCLETIEEIDKENRENFLKNGGQSYQYIPALNVEHAHIEMMGKLILEKLA.

Fe cation-binding residues include His196 and Glu277.

It belongs to the ferrochelatase family.

The protein localises to the cytoplasm. The catalysed reaction is heme b + 2 H(+) = protoporphyrin IX + Fe(2+). It participates in porphyrin-containing compound metabolism; protoheme biosynthesis; protoheme from protoporphyrin-IX: step 1/1. In terms of biological role, catalyzes the ferrous insertion into protoporphyrin IX. The chain is Ferrochelatase from Haemophilus influenzae (strain PittEE).